We begin with the raw amino-acid sequence, 562 residues long: Furostanol glycoside 26-O-beta-glucosidase (562 aa).

Residues 1-44 (MAAQLGLPLVSCHRGASQAASSSAHLVPGASAIMQAGNRRQKMR) constitute a chloroplast transit peptide. Residues Gln110, His214, and 259-260 (NE) contribute to the a beta-D-glucoside site. The active-site Proton donor is the Glu260. Residues Cys279 and Cys285 are joined by a disulfide bond. A beta-D-glucoside is bound by residues Tyr401, Glu472, Trp518, 525 to 526 (EW), and Phe534. The active-site Nucleophile is Glu472.

Belongs to the glycosyl hydrolase 1 family. In terms of assembly, heterodimer. The N-terminus of the larger subunit is blocked and the smaller subunit might be derived from the larger one.

It is found in the plastid. The protein localises to the chloroplast. The catalysed reaction is protodioscin + H2O = 26-deglucoprotodioscin + D-glucose. Its activity is regulated as follows. Partially inhibited by glucono-1,5-lactone, conduritol beta-epoxide and diosgenin, but not by beta-sitosterol or cholesterol. Beta-glucosidase involved in saponin metabolism. Highly specific for the cleavage of C-26-bound glucose moiety of furostanol glycosides such as protogracillin and protodioscin. No activity with nuatigenin glycoside. Convers furostanol glycosides to spirostanol glycosides. This chain is Furostanol glycoside 26-O-beta-glucosidase, found in Hellenia speciosa (Crepe ginger).